The following is a 727-amino-acid chain: ABC transporter G family member STR2 (727 aa).

Over 1–475 the chain is Cytoplasmic; it reads MKTQGLELET…NFTNIRRTPE (475 aa). Positions 25–275 constitute an ABC transporter domain; that stretch reads LEFESLTYTV…LNRMGRKIPK (251 aa). 69 to 76 is a binding site for ATP; sequence GPSGAGKS. Residues 476–496 form a helical membrane-spanning segment; that stretch reads LFLSRLMVLTFMGVMMATMFH. Topologically, residues 497-510 are extracellular; it reads NPKNTLQGITNRLS. The helical transmembrane segment at 511-531 threads the bilayer; that stretch reads FFIFTVCLFFFSSNDAVPAFI. At 532 to 559 the chain is on the cytoplasmic side; it reads QERFIFIRETSHNAYRASCYTIASLITH. The helical transmembrane segment at 560-580 threads the bilayer; sequence MPFLALQALAYAAIVWFALEL. Topologically, residues 581–583 are extracellular; sequence RGP. A helical transmembrane segment spans residues 584–604; it reads FIYFFLVLFISLLSTNSFVVF. The Cytoplasmic portion of the chain corresponds to 605 to 612; it reads VSSIVPNY. A helical membrane pass occupies residues 613–633; the sequence is ILGYAAVIAFTALFFLFCGYF. The Extracellular segment spans residues 634-699; it reads LSSEDIPLYW…GTEEIKKRNN (66 aa). The N-linked (GlcNAc...) asparagine glycan is linked to asparagine 667. The helical transmembrane segment at 700–720 threads the bilayer; sequence VLIMLGWAVLYRILFYIILRF. Topologically, residues 721-727 are cytoplasmic; that stretch reads ASKNQRS.

Belongs to the ABC transporter superfamily. ABCG family. Stunted arbuscule (STR) subfamily. Heterodimerizes with STR; the resulting transporter is located in the peri-arbuscular membrane. In terms of tissue distribution, expressed constitutively in the vascular tissue of roots.

It localises to the cell membrane. In terms of biological role, together with STR, required for arbuscule development in arbuscular mycorrhizal symbiosis. In Medicago truncatula (Barrel medic), this protein is ABC transporter G family member STR2.